Here is a 368-residue protein sequence, read N- to C-terminus: Methionine import ATP-binding protein MetN (368 aa).

The ABC transporter domain maps to 5–260 (IELNNLSVQF…PKEALTKQFI (256 aa)). 41–48 (GYSGAGKS) provides a ligand contact to ATP.

This sequence belongs to the ABC transporter superfamily. Methionine importer (TC 3.A.1.24) family. The complex is composed of two ATP-binding proteins (MetN), two transmembrane proteins (MetI) and a solute-binding protein (MetQ).

The protein resides in the cell membrane. It carries out the reaction L-methionine(out) + ATP + H2O = L-methionine(in) + ADP + phosphate + H(+). The catalysed reaction is D-methionine(out) + ATP + H2O = D-methionine(in) + ADP + phosphate + H(+). In terms of biological role, part of the ABC transporter complex MetNIQ involved in methionine import. Responsible for energy coupling to the transport system. This is Methionine import ATP-binding protein MetN from Lactococcus lactis subsp. cremoris (strain MG1363).